Reading from the N-terminus, the 397-residue chain is Acetate kinase (397 aa).

Asn-8 contacts Mg(2+). Lys-15 is a binding site for ATP. Arg-89 contacts substrate. Asp-146 functions as the Proton donor/acceptor in the catalytic mechanism. ATP-binding positions include His-206–Gly-210, Asp-281–Arg-283, and Gly-329–Asn-333. Glu-382 serves as a coordination point for Mg(2+).

Belongs to the acetokinase family. Homodimer. Requires Mg(2+) as cofactor. The cofactor is Mn(2+).

Its subcellular location is the cytoplasm. The catalysed reaction is acetate + ATP = acetyl phosphate + ADP. The protein operates within metabolic intermediate biosynthesis; acetyl-CoA biosynthesis; acetyl-CoA from acetate: step 1/2. In terms of biological role, catalyzes the formation of acetyl phosphate from acetate and ATP. Can also catalyze the reverse reaction. The chain is Acetate kinase from Anoxybacillus flavithermus (strain DSM 21510 / WK1).